A 738-amino-acid chain; its full sequence is NAD(P)H-quinone oxidoreductase subunit 5, chloroplastic (738 aa).

17 helical membrane-spanning segments follow: residues 9-29, 39-59, 89-109, 125-145, 147-167, 185-205, 219-239, 258-278, 280-300, 327-347, 354-374, 396-416, 425-445, 542-562, 610-630, 691-711, and 717-737; these read WVIP…LFLI, IWAF…LHLS, VDPL…LVLI, FVYI…SNLI, IYFF…FWFT, GDFG…SLEF, NGIN…GAVA, TPIS…FLLA, LLPL…VGTI, LGYM…FHLI, ALLF…VGYS, TTFL…CFWS, WLYS…TAFY, LFPL…GIPF, SLAI…YSFF, GVID…GEEI, and GRIS…LFFI.

Belongs to the complex I subunit 5 family. In terms of assembly, NDH is composed of at least 16 different subunits, 5 of which are encoded in the nucleus.

The protein resides in the plastid. The protein localises to the chloroplast thylakoid membrane. It catalyses the reaction a plastoquinone + NADH + (n+1) H(+)(in) = a plastoquinol + NAD(+) + n H(+)(out). It carries out the reaction a plastoquinone + NADPH + (n+1) H(+)(in) = a plastoquinol + NADP(+) + n H(+)(out). NDH shuttles electrons from NAD(P)H:plastoquinone, via FMN and iron-sulfur (Fe-S) centers, to quinones in the photosynthetic chain and possibly in a chloroplast respiratory chain. The immediate electron acceptor for the enzyme in this species is believed to be plastoquinone. Couples the redox reaction to proton translocation, and thus conserves the redox energy in a proton gradient. The chain is NAD(P)H-quinone oxidoreductase subunit 5, chloroplastic (ndhF) from Saccharum hybrid (Sugarcane).